A 776-amino-acid chain; its full sequence is Homoaconitase, mitochondrial (776 aa).

A mitochondrion-targeting transit peptide spans 1 to 24; it reads MVALRRAVALNAVAIARLQTRALT. Cys-392, Cys-459, and Cys-462 together coordinate [4Fe-4S] cluster.

The protein belongs to the aconitase/IPM isomerase family. It depends on [4Fe-4S] cluster as a cofactor.

It localises to the mitochondrion. It carries out the reaction (2R,3S)-homoisocitrate = cis-homoaconitate + H2O. It participates in amino-acid biosynthesis; L-lysine biosynthesis via AAA pathway; L-alpha-aminoadipate from 2-oxoglutarate: step 3/5. Catalyzes the reversible hydration of cis-homoaconitate to (2R,3S)-homoisocitrate, a step in the alpha-aminoadipate pathway for lysine biosynthesis. This Gibberella zeae (strain ATCC MYA-4620 / CBS 123657 / FGSC 9075 / NRRL 31084 / PH-1) (Wheat head blight fungus) protein is Homoaconitase, mitochondrial (LYS4).